A 1170-amino-acid chain; its full sequence is Thrombospondin-2 (1170 aa).

The N-terminal stretch at 1 to 18 (MLWPLLLLALWAWPSAQA) is a signal peptide. Residues 19–215 (GDQDEDTAFD…LQNVYLVFEN (197 aa)) form the Laminin G-like domain. A heparin-binding region spans residues 19–232 (GDQDEDTAFD…KKGCQQSQGA (214 aa)). Residues N151, N316, and N330 are each glycosylated (N-linked (GlcNAc...) asparagine). A VWFC domain is found at 318 to 375 (SACWQDGRFFAENETWVVDSCTKCTCKKFKTVCHQISCPPATCADPWFVEGECCPSCV). 3 TSP type-1 domains span residues 379-429 (EEGW…GRCD), 435-490 (DGGW…PPCP), and 492-547 (DGRW…KSCP). Intrachain disulfides connect C391/C423, C395/C428, C406/C413, C447/C484, C451/C489, C462/C474, C504/C541, C508/C546, C519/C531, C551/C562, C556/C572, C575/C586, C592/C608, C599/C617, C620/C644, C650/C663, C657/C676, C678/C689, C705/C713, C718/C738, C754/C774, C777/C797, C813/C833, C836/C856, C874/C894, and C910/C930. Residue N455 is glycosylated (N-linked (GlcNAc...) asparagine). The EGF-like 1 domain maps to 547–587 (PIDGCLSNPCFPGAECSSFPDGSWSCGSCPGGFLGNGTHCE). An N-linked (GlcNAc...) asparagine glycan is attached at N582. The EGF-like 2 domain occupies 646 to 690 (PENPCKDKTHSCHRHAECIYLGHFSDPMYKCECQTGYAGDGLICG). TSP type-3 repeat units lie at residues 691–726 (EDSDLDGWPNKNLVCATNATYHCVKDNCPLLPNSGQ), 727–762 (EDFDKDGIGDACDDDDDNDGVSDEKDNCQLLFNPRQ), 763–785 (FDYDKDEVGDRCDNCPYVHNPAQ), 786–821 (IDTDNNGEGDACSVDIDGDDVFNERDNCPYVYNTDQ), 822–844 (RDTDGDGVGDHCDNCPLVHNPDQ), 845–882 (TDVDNDLVGDQCDNNEDIDEDGHQNNQDNCPHIPNANQ), 883–918 (ADHDRDGQGDACDSDDDNDGIPDDRDNCRLVANPDQ), and 919–954 (EDSDGDRRGDACKDDFDNDSIPDIDDVCPENNAISE). A glycan (N-linked (GlcNAc...) asparagine) is linked at N708. The interval 731–750 (KDGIGDACDDDDDNDGVSDE) is disordered. Positions 737–747 (ACDDDDDNDGV) are enriched in acidic residues. The segment at 841 to 944 (NPDQTDVDND…DNDSIPDIDD (104 aa)) is disordered. Composition is skewed to acidic residues over residues 845–864 (TDVDNDLVGDQCDNNEDIDE) and 894–903 (CDSDDDNDGI). Positions 923-933 (GDRRGDACKDD) are enriched in basic and acidic residues. The Cell attachment site motif lies at 926–928 (RGD). The span at 934 to 944 (FDNDSIPDIDD) shows a compositional bias: acidic residues. 2 N-linked (GlcNAc...) asparagine glycosylation sites follow: N936 and N1067. C946 and C1167 form a disulfide bridge. The TSP C-terminal domain maps to 958–1170 (RNFQMVHLDP…SDLKYECRDV (213 aa)).

Belongs to the thrombospondin family. In terms of assembly, homotrimer; disulfide-linked. Can bind to fibrinogen, fibronectin, laminin and type V collagen. Interacts (via the TSP type I repeats) with CD36; the interaction conveys an antiangiogenic effect. Interacts (via the TSP type I repeats) with HRG; the interaction blocks the antiangiogenic effect of THBS2 with CD36.

In terms of biological role, adhesive glycoprotein that mediates cell-to-cell and cell-to-matrix interactions. Ligand for CD36 mediating antiangiogenic properties. The sequence is that of Thrombospondin-2 (THBS2) from Bos taurus (Bovine).